We begin with the raw amino-acid sequence, 603 residues long: DNA-directed RNA polymerase subunit beta' N-terminal section (603 aa).

Zn(2+) contacts are provided by cysteine 283, cysteine 285, cysteine 329, and cysteine 332.

This sequence belongs to the RNA polymerase beta' chain family. RpoC1 subfamily. In terms of assembly, in plastids the minimal PEP RNA polymerase catalytic core is composed of four subunits: alpha, beta, beta', and beta''. When a (nuclear-encoded) sigma factor is associated with the core the holoenzyme is formed, which can initiate transcription. Zn(2+) is required as a cofactor.

It localises to the plastid. The protein resides in the chloroplast. It carries out the reaction RNA(n) + a ribonucleoside 5'-triphosphate = RNA(n+1) + diphosphate. Functionally, DNA-dependent RNA polymerase catalyzes the transcription of DNA into RNA using the four ribonucleoside triphosphates as substrates. This chain is DNA-directed RNA polymerase subunit beta' N-terminal section (rpoC1A), found in Chlamydomonas reinhardtii (Chlamydomonas smithii).